Consider the following 694-residue polypeptide: Putative serine/threonine-protein kinase R679 (694 aa).

The Protein kinase domain maps to 167–548 (ITKNKTVGKG…ITNILKHLFT (382 aa)). Residues 173 to 181 (VGKGAAGIA) and Lys-196 each bind ATP. The Proton acceptor role is filled by Asp-395.

It belongs to the protein kinase superfamily. Ser/Thr protein kinase family.

It is found in the virion. It carries out the reaction L-seryl-[protein] + ATP = O-phospho-L-seryl-[protein] + ADP + H(+). The enzyme catalyses L-threonyl-[protein] + ATP = O-phospho-L-threonyl-[protein] + ADP + H(+). The polypeptide is Putative serine/threonine-protein kinase R679 (Acanthamoeba polyphaga (Amoeba)).